A 53-amino-acid polypeptide reads, in one-letter code: Zinc metalloproteinase-disintegrin-like alborhagin (53 aa).

It belongs to the venom metalloproteinase (M12B) family. P-III subfamily. P-IIIb sub-subfamily. As to quaternary structure, monomer. Zn(2+) is required as a cofactor. Contains numerous disulfide bonds. Post-translationally, glycosylated. As to expression, expressed by the venom gland.

The protein localises to the secreted. With respect to regulation, alborhagin-induced platelet aggregation, but not shape change, is inhibited by EDTA, suggesting that the platelet activation (shape change) is independent of divalent cation or metalloproteinase activity. Induces platelet activation and glycoprotein VI (GP6)-dependent platelet aggregation. Induces ectodomain cleavage of GP6 by activating endogenous platelet metalloproteinases (probably ADAM10). Has fibrinogenolytic activity against the alpha chain of fibrinogen (FGA). Recognizes distinct binding sites as convulxin, since alborhagin has minimal effect on convulxin binding to GPVI-expressing cells. Its function is as follows. Disintegrin alborhagin-C: 42 kDa fragment of alborhagin autoproteolysed that does not show platelet activation. This Trimeresurus albolabris (White-lipped pit viper) protein is Zinc metalloproteinase-disintegrin-like alborhagin.